We begin with the raw amino-acid sequence, 318 residues long: Olfactory receptor 13C2 (318 aa).

Residues 1 to 25 are Extracellular-facing; that stretch reads MEWENHTILVEFFLKGLSGHPRLEL. An N-linked (GlcNAc...) asparagine glycan is attached at Asn5. The chain crosses the membrane as a helical span at residues 26-46; the sequence is LFFVLIFIMYVVILLGNGTLI. The Cytoplasmic segment spans residues 47 to 54; the sequence is LISILDPH. The helical transmembrane segment at 55–75 threads the bilayer; that stretch reads LHTPMYFFLGNLSFLDICYTT. Over 76-99 the chain is Extracellular; that stretch reads TSIPSTLVSFLSERKTISLSGCAV. Cys97 and Cys189 are disulfide-bonded. Residues 100–120 traverse the membrane as a helical segment; sequence QMFLGLAMGTTECVLLGMMAF. The Cytoplasmic segment spans residues 121–139; it reads DRYVAICNPLRYPIIMSKD. A helical transmembrane segment spans residues 140–160; it reads AYVPMAAGSWIIGAVNSAVQS. Residues 161-197 lie on the Extracellular side of the membrane; sequence VFVVQLPFCRNNIINHFTCEILAVMKLACADISDNEF. A helical membrane pass occupies residues 198–217; sequence IMLVATTLFILTPLLLIIVS. The Cytoplasmic segment spans residues 218 to 237; that stretch reads YTLIIVSIFKISSSEGRSKA. The chain crosses the membrane as a helical span at residues 238 to 258; sequence SSTCSAHLTVVIIFYGTILFM. Residues 259-277 are Extracellular-facing; that stretch reads YMKPKSKETLNSDDLDATD. The helical transmembrane segment at 278–298 threads the bilayer; that stretch reads KIISMFYGVMTPMMNPLIYSL. The Cytoplasmic portion of the chain corresponds to 299–318; that stretch reads RNKDVKEAVKHLLNRRFFSK.

It belongs to the G-protein coupled receptor 1 family.

The protein localises to the cell membrane. Its function is as follows. Odorant receptor. The chain is Olfactory receptor 13C2 (OR13C2) from Homo sapiens (Human).